A 322-amino-acid chain; its full sequence is Large ribosomal subunit protein uL10 (322 aa).

The segment at 294 to 322 (APAAAAKAEKEEEPAEESDDEMGFGLFDE) is disordered. A compositionally biased stretch (acidic residues) spans 304 to 322 (EEEPAEESDDEMGFGLFDE).

This sequence belongs to the universal ribosomal protein uL10 family. In terms of assembly, P0 forms a pentameric complex by interaction with dimers of P1 and P2. In terms of processing, phosphorylated.

Ribosomal protein P0 is the functional equivalent of E.coli protein L10. The polypeptide is Large ribosomal subunit protein uL10 (Lupinus luteus (European yellow lupine)).